An 86-amino-acid polypeptide reads, in one-letter code: Cytochrome c-555 (86 aa).

Heme c is bound by residues cysteine 14, cysteine 17, histidine 18, and methionine 60.

Binds 1 heme c group covalently per subunit.

Functionally, this basic c-type monoheme cytochrome has been found exclusively in the green photosynthetic bacteria, although its role in bacterial photosynthesis is not established. It has an unusually low redox potential compared with mitochondrial cytochrome c. It is reactive with cytochrome c oxidases but not with reductases. This is Cytochrome c-555 from Chlorobaculum thiosulfatiphilum (Chlorobium limicola f.sp. thiosulfatophilum).